We begin with the raw amino-acid sequence, 194 residues long: Protein GrpE (194 aa).

Residues 1–14 (MENTQENPTSQNPT) show a composition bias toward polar residues. Positions 1-50 (MENTQENPTSQNPTPADETARQAAEAAAPQQEAAANAATDSPVNAEQSAL) are disordered. Low complexity predominate over residues 21-38 (RQAAEAAAPQQEAAANAA).

It belongs to the GrpE family. In terms of assembly, homodimer.

Its subcellular location is the cytoplasm. Functionally, participates actively in the response to hyperosmotic and heat shock by preventing the aggregation of stress-denatured proteins, in association with DnaK and GrpE. It is the nucleotide exchange factor for DnaK and may function as a thermosensor. Unfolded proteins bind initially to DnaJ; upon interaction with the DnaJ-bound protein, DnaK hydrolyzes its bound ATP, resulting in the formation of a stable complex. GrpE releases ADP from DnaK; ATP binding to DnaK triggers the release of the substrate protein, thus completing the reaction cycle. Several rounds of ATP-dependent interactions between DnaJ, DnaK and GrpE are required for fully efficient folding. In Paraburkholderia phytofirmans (strain DSM 17436 / LMG 22146 / PsJN) (Burkholderia phytofirmans), this protein is Protein GrpE.